Consider the following 132-residue polypeptide: uncharacterized protein (132 aa).

The N-terminal stretch at 1–18 (MRKIISMLFIPLFIFAMA) is a signal peptide.

This is an uncharacterized protein from Aquifex aeolicus (strain VF5).